The chain runs to 882 residues: Pentatricopeptide repeat-containing protein At3g03580 (882 aa).

PPR repeat units follow at residues 3 to 37 (TRVS…GLDS), 38 to 68 (SDFF…VSPA), 70 to 104 (NVYL…KVSP), 105 to 139 (DKYT…GFES), 140 to 170 (DLFV…MPVR), 171 to 205 (DLVS…WIVP), 206 to 240 (DSFT…GVNS), 241 to 271 (VVVV…MDVR), 272 to 307 (DSVS…KPDL), 309 to 340 (TVSS…GFVL), 341 to 371 (ESTV…MECK), 372 to 406 (DTVS…EEQA), 407 to 441 (DHIT…GICI), 442 to 472 (DLSV…MGTG), 473 to 507 (DTVT…EVVP), 508 to 542 (DMAT…GYES), 543 to 573 (ELQI…MSRR), 574 to 608 (DVVT…GIVP), 609 to 639 (DSVV…MKTH), and 645 to 675 (MIEH…MPIK). The tract at residues 680–755 (IWASVLRACR…NPGYSWIEVG (76 aa)) is type E motif. Positions 756–786 (KNVHVFSSGDDSAPQSEAIYKSLEILYSLMA) are type E(+) motif. The interval 787–882 (KEGYIPDPRE…DGTCSCKDRW (96 aa)) is type DYW motif.

Belongs to the PPR family. PCMP-H subfamily.

This chain is Pentatricopeptide repeat-containing protein At3g03580 (PCMP-H23), found in Arabidopsis thaliana (Mouse-ear cress).